The sequence spans 847 residues: Histidine decarboxylase (847 aa).

Substrate is bound by residues Phe-80 and His-193. At Lys-304 the chain carries N6-(pyridoxal phosphate)lysine. Residues Gly-575–Gln-605 are compositionally biased toward polar residues. Disordered regions lie at residues Gly-575 to Pro-662, Gln-769 to Leu-798, and Ser-813 to Leu-847. A compositionally biased stretch (acidic residues) spans Glu-606 to Glu-616. 2 stretches are compositionally biased toward low complexity: residues Ser-634–Ser-657 and Gln-769–Gly-787. The span at Asp-832–Leu-847 shows a compositional bias: polar residues.

Belongs to the group II decarboxylase family. In terms of assembly, homodimer. It depends on pyridoxal 5'-phosphate as a cofactor. As to expression, localized primarily to the photoreceptors, in the eye.

It carries out the reaction L-histidine + H(+) = histamine + CO2. In terms of biological role, required in photoreceptor transmitter synthesis. Catlayzes the conversion of L-histidine to histamine. The polypeptide is Histidine decarboxylase (Hdc) (Drosophila melanogaster (Fruit fly)).